A 140-amino-acid polypeptide reads, in one-letter code: Ribosome maturation factor RimP (140 aa).

Belongs to the RimP family.

The protein resides in the cytoplasm. In terms of biological role, required for maturation of 30S ribosomal subunits. This is Ribosome maturation factor RimP from Campylobacter jejuni subsp. jejuni serotype O:6 (strain 81116 / NCTC 11828).